Consider the following 484-residue polypeptide: tRNA sulfurtransferase (484 aa).

The region spanning 63-167 (ANLILLLSST…NEKLFFIDKK (105 aa)) is the THUMP domain. ATP-binding positions include 185–186 (LI), K267, G289, and Q298. A disulfide bridge links C346 with C458. Positions 406–484 (FAENEIVLDI…GFDNVKVYRP (79 aa)) constitute a Rhodanese domain. The active-site Cysteine persulfide intermediate is the C458.

The protein belongs to the ThiI family.

The protein localises to the cytoplasm. The catalysed reaction is [ThiI sulfur-carrier protein]-S-sulfanyl-L-cysteine + a uridine in tRNA + 2 reduced [2Fe-2S]-[ferredoxin] + ATP + H(+) = [ThiI sulfur-carrier protein]-L-cysteine + a 4-thiouridine in tRNA + 2 oxidized [2Fe-2S]-[ferredoxin] + AMP + diphosphate. It carries out the reaction [ThiS sulfur-carrier protein]-C-terminal Gly-Gly-AMP + S-sulfanyl-L-cysteinyl-[cysteine desulfurase] + AH2 = [ThiS sulfur-carrier protein]-C-terminal-Gly-aminoethanethioate + L-cysteinyl-[cysteine desulfurase] + A + AMP + 2 H(+). It participates in cofactor biosynthesis; thiamine diphosphate biosynthesis. Catalyzes the ATP-dependent transfer of a sulfur to tRNA to produce 4-thiouridine in position 8 of tRNAs, which functions as a near-UV photosensor. Also catalyzes the transfer of sulfur to the sulfur carrier protein ThiS, forming ThiS-thiocarboxylate. This is a step in the synthesis of thiazole, in the thiamine biosynthesis pathway. The sulfur is donated as persulfide by IscS. This is tRNA sulfurtransferase from Psychromonas ingrahamii (strain DSM 17664 / CCUG 51855 / 37).